The sequence spans 320 residues: Eukaryotic translation initiation factor 3 subunit G (320 aa).

The tract at residues 1 to 25 is disordered; it reads MPTGDFDSKPSWADQVEEEGEDDKC. A phosphoserine mark is found at Ser8 and Ser11. Thr38 and Thr41 each carry phosphothreonine. Phosphoserine occurs at positions 42, 189, 223, and 264. The tract at residues 209–234 is disordered; it reads KTGKYVPPSLRDGASRRGESMQPNRR. Positions 221 to 234 are enriched in basic and acidic residues; that stretch reads GASRRGESMQPNRR. One can recognise an RRM domain in the interval 239–317; the sequence is ATIRVTNLSE…LILNVEWAKP (79 aa).

Belongs to the eIF-3 subunit G family. In terms of assembly, component of the eukaryotic translation initiation factor 3 (eIF-3) complex, which is composed of 13 subunits: EIF3A, EIF3B, EIF3C, EIF3D, EIF3E, EIF3F, EIF3G, EIF3H, EIF3I, EIF3J, EIF3K, EIF3L and EIF3M. The eIF-3 complex appears to include 3 stable modules: module A is composed of EIF3A, EIF3B, EIF3G and EIF3I; module B is composed of EIF3F, EIF3H, and EIF3M; and module C is composed of EIF3C, EIF3D, EIF3E, EIF3K and EIF3L. EIF3C of module C binds EIF3B of module A and EIF3H of module B, thereby linking the three modules. EIF3J is a labile subunit that binds to the eIF-3 complex via EIF3B. The eIF-3 complex interacts with RPS6KB1 under conditions of nutrient depletion. Mitogenic stimulation leads to binding and activation of a complex composed of FRAP1 and RAPTOR, leading to phosphorylation and release of RPS6KB1 and binding of EIF4B to eIF-3. Interacts (via C-terminus) with AIFM1 (via N-terminus). Interacts with DHX33; the interaction is independent of RNA. In terms of processing, phosphorylated. Phosphorylation is enhanced upon serum stimulation.

The protein resides in the cytoplasm. Its subcellular location is the nucleus. The protein localises to the perinuclear region. Its function is as follows. RNA-binding component of the eukaryotic translation initiation factor 3 (eIF-3) complex, which is required for several steps in the initiation of protein synthesis. The eIF-3 complex associates with the 40S ribosome and facilitates the recruitment of eIF-1, eIF-1A, eIF-2:GTP:methionyl-tRNAi and eIF-5 to form the 43S pre-initiation complex (43S PIC). The eIF-3 complex stimulates mRNA recruitment to the 43S PIC and scanning of the mRNA for AUG recognition. The eIF-3 complex is also required for disassembly and recycling of post-termination ribosomal complexes and subsequently prevents premature joining of the 40S and 60S ribosomal subunits prior to initiation. The eIF-3 complex specifically targets and initiates translation of a subset of mRNAs involved in cell proliferation, including cell cycling, differentiation and apoptosis, and uses different modes of RNA stem-loop binding to exert either translational activation or repression. This subunit can bind 18S rRNA. The chain is Eukaryotic translation initiation factor 3 subunit G from Bos taurus (Bovine).